We begin with the raw amino-acid sequence, 510 residues long: ATP synthase subunit alpha (510 aa).

169–176 (GDRQTGKT) contributes to the ATP binding site.

Belongs to the ATPase alpha/beta chains family. In terms of assembly, F-type ATPases have 2 components, CF(1) - the catalytic core - and CF(0) - the membrane proton channel. CF(1) has five subunits: alpha(3), beta(3), gamma(1), delta(1), epsilon(1). CF(0) has four main subunits: a(1), b(1), b'(1) and c(9-12).

Its subcellular location is the cell inner membrane. The catalysed reaction is ATP + H2O + 4 H(+)(in) = ADP + phosphate + 5 H(+)(out). Its function is as follows. Produces ATP from ADP in the presence of a proton gradient across the membrane. The alpha chain is a regulatory subunit. The chain is ATP synthase subunit alpha from Rhodopseudomonas palustris (strain BisB18).